The sequence spans 500 residues: Cholesterol 24-hydroxylase (500 aa).

Residues 3 to 23 (PGLLLLGSAVLLAFGLCCTFV) traverse the membrane as a helical segment. C437 is a heme binding site.

This sequence belongs to the cytochrome P450 family. Heme is required as a cofactor. In terms of tissue distribution, expressed in brain. The mRNA was broadly distributed with higher levels in gray matter zones and lower levels in regions rich in white matter. Not detected in fetal sample but its expression increases linearly with age.

The protein resides in the endoplasmic reticulum membrane. The protein localises to the microsome membrane. It localises to the postsynapse. Its subcellular location is the presynapse. It is found in the cell projection. The protein resides in the dendrite. It catalyses the reaction cholesterol + reduced [NADPH--hemoprotein reductase] + O2 = (24S)-hydroxycholesterol + oxidized [NADPH--hemoprotein reductase] + H2O + H(+). The catalysed reaction is cholestanol + reduced [NADPH--hemoprotein reductase] + O2 = (24S)-hydroxycholestanol + oxidized [NADPH--hemoprotein reductase] + H2O + H(+). It carries out the reaction 7-dehydrocholesterol + reduced [NADPH--hemoprotein reductase] + O2 = cholesta-5,7-dien-3beta,24S-diol + oxidized [NADPH--hemoprotein reductase] + H2O + H(+). The enzyme catalyses 7-dehydrocholesterol + reduced [NADPH--hemoprotein reductase] + O2 = cholesta-5,7-dien-3beta,25-diol + oxidized [NADPH--hemoprotein reductase] + H2O + H(+). It catalyses the reaction desmosterol + reduced [NADPH--hemoprotein reductase] + O2 = (24Z),26-hydroxydesmosterol + oxidized [NADPH--hemoprotein reductase] + H2O + H(+). The catalysed reaction is desmosterol + reduced [NADPH--hemoprotein reductase] + O2 = (24S)-25-epoxycholesterol + oxidized [NADPH--hemoprotein reductase] + H2O + H(+). It carries out the reaction 4beta-hydroxycholesterol + reduced [NADPH--hemoprotein reductase] + O2 = 4beta,24S-dihydroxycholesterol + oxidized [NADPH--hemoprotein reductase] + H2O + H(+). The enzyme catalyses (24S)-hydroxycholesterol + reduced [NADPH--hemoprotein reductase] + O2 = (24S,25R)-24,26-dihydroxycholesterol + oxidized [NADPH--hemoprotein reductase] + H2O + H(+). It catalyses the reaction (24S)-hydroxycholesterol + reduced [NADPH--hemoprotein reductase] + O2 = 24S,25-dihydroxycholesterol + oxidized [NADPH--hemoprotein reductase] + H2O + H(+). The catalysed reaction is 7alpha-hydroxycholesterol + reduced [NADPH--hemoprotein reductase] + O2 = (24S)-7alpha-dihydroxycholesterol + oxidized [NADPH--hemoprotein reductase] + H2O + H(+). It carries out the reaction progesterone + reduced [NADPH--hemoprotein reductase] + O2 = 17alpha-hydroxyprogesterone + oxidized [NADPH--hemoprotein reductase] + H2O + H(+). The enzyme catalyses testosterone + reduced [NADPH--hemoprotein reductase] + O2 = 16beta,17beta-dihydroxyandrost-4-en-3-one + oxidized [NADPH--hemoprotein reductase] + H2O + H(+). It catalyses the reaction testosterone + reduced [NADPH--hemoprotein reductase] + O2 = 2-hydroxytestosterone + oxidized [NADPH--hemoprotein reductase] + H2O + H(+). The catalysed reaction is testosterone + reduced [NADPH--hemoprotein reductase] + O2 = 6beta,17beta-dihydroxyandrost-4-en-3-one + oxidized [NADPH--hemoprotein reductase] + H2O + H(+). It functions in the pathway steroid metabolism; cholesterol degradation. The protein operates within lipid metabolism; C21-steroid hormone metabolism. Functionally, P450 monooxygenase that plays a major role in cholesterol homeostasis in the brain. Primarily catalyzes the hydroxylation (with S stereochemistry) at C-24 of cholesterol side chain, triggering cholesterol diffusion out of neurons and its further degradation. By promoting constant cholesterol elimination in neurons, may activate the mevalonate pathway and coordinate the synthesis of new cholesterol and nonsterol isoprenoids involved in synaptic activity and learning. Further hydroxylates cholesterol derivatives and hormone steroids on both the ring and side chain of these molecules, converting them into active oxysterols involved in lipid signaling and biosynthesis. Acts as an epoxidase converting cholesta-5,24-dien-3beta-ol/desmosterol into (24S),25-epoxycholesterol, an abundant lipid ligand of nuclear NR1H2 and NR1H3 receptors shown to promote neurogenesis in developing brain. May also catalyze the oxidative metabolism of xenobiotics, such as clotrimazole. This chain is Cholesterol 24-hydroxylase, found in Homo sapiens (Human).